The following is a 1353-amino-acid chain: Stress response protein NST1 (1353 aa).

Polar residues predominate over residues 1–12; that stretch reads MSSKSQQPPTGL. Disordered stretches follow at residues 1–66, 216–422, 503–522, 531–618, 652–694, 727–882, 979–1119, 1140–1276, and 1308–1337; these read MSSK…FFNF, NANA…TQSS, NGLRPPPSGAGPFPGSVEVD, DHRA…SFGS, RRSV…AEEG, LREL…AKET, GLKS…DDAF, GSLI…GAGV, and GGTAGSGLVQGHVGGGGYSQGLFSPQHQQQ. A compositionally biased stretch (basic residues) spans 16-25; the sequence is AAKKRAKKAA. The span at 26 to 45 shows a compositional bias: low complexity; it reads KQSQNPQPQSAPQTSSQTPA. Over residues 46-59 the composition is skewed to pro residues; the sequence is SVPPLPPASVPDPL. Polar residues predominate over residues 218-229; it reads NARSFPSPQQTI. A compositionally biased stretch (acidic residues) spans 242-254; the sequence is REEEYDDEEEIEE. The segment covering 268-277 has biased composition (basic residues); that stretch reads KKNKKKKKKG. The segment covering 287 to 300 has biased composition (pro residues); it reads VEPPAPLPPLPPPS. Residues 317–330 show a composition bias toward low complexity; sequence LPTHQPQPLSQQPP. The span at 331 to 349 shows a compositional bias: pro residues; that stretch reads SLNPLPPPAPASAPTPTPP. The span at 368-388 shows a compositional bias: low complexity; sequence PARSARAAGKAPASAAPPHNA. Over residues 531 to 541 the composition is skewed to basic and acidic residues; sequence DHRAPELHDHD. The span at 542–583 shows a compositional bias: acidic residues; the sequence is PDDLDGEESEEYDDDDDYADDDELDDDDIGTDEADVGDEIDE. Basic and acidic residues predominate over residues 654-665; the sequence is SVREEQNLRDMQ. Over residues 666 to 681 the composition is skewed to acidic residues; that stretch reads EETDEEEEEEDDDESR. Basic and acidic residues-rich tracts occupy residues 682-694, 727-750, and 760-882; these read DEPMTEKERAEEG, LRELEEEEDSKRAKEEKKAKEAQK, and QKAE…AKET. A coiled-coil region spans residues 713–944; sequence AYRERVAKQR…AAQQAQRERA (232 aa). Positions 1009–1021 are enriched in polar residues; that stretch reads TNATPGRSMQKTP. A compositionally biased stretch (pro residues) spans 1154 to 1165; it reads PTPPAPIAPPNL. Polar residues-rich tracts occupy residues 1174 to 1187 and 1209 to 1220; these read SDGQTSGPNVLRST and QPQQRRPTTSWD.

The protein belongs to the NST1 family.

It is found in the cytoplasm. May act as a negative regulator of salt tolerance. This chain is Stress response protein NST1 (NST1), found in Cryptococcus neoformans var. neoformans serotype D (strain B-3501A) (Filobasidiella neoformans).